Reading from the N-terminus, the 396-residue chain is Protein btn1 (396 aa).

A run of 8 helical transmembrane segments spans residues 15–35 (CFLI…SAAL), 45–65 (GVVL…ASIL), 76–96 (IGFC…SSSV), 138–158 (LAGL…NFSV), 161–181 (TLII…FVLP), 234–254 (FLVY…LLFP), 296–316 (LAIT…LYLT), and 321–341 (FVLF…VNVY).

Belongs to the battenin family.

It localises to the endoplasmic reticulum membrane. Its subcellular location is the vacuole membrane. In terms of biological role, involved in vacuolar transport and vacuole pH homeostasis. Also required for cytokinesis. The sequence is that of Protein btn1 from Schizosaccharomyces pombe (strain 972 / ATCC 24843) (Fission yeast).